Reading from the N-terminus, the 290-residue chain is 4-hydroxy-tetrahydrodipicolinate synthase (290 aa).

Thr44 is a pyruvate binding site. The active-site Proton donor/acceptor is Tyr132. Lys160 acts as the Schiff-base intermediate with substrate in catalysis. Ile202 is a pyruvate binding site.

It belongs to the DapA family. As to quaternary structure, homotetramer; dimer of dimers.

Its subcellular location is the cytoplasm. It carries out the reaction L-aspartate 4-semialdehyde + pyruvate = (2S,4S)-4-hydroxy-2,3,4,5-tetrahydrodipicolinate + H2O + H(+). It functions in the pathway amino-acid biosynthesis; L-lysine biosynthesis via DAP pathway; (S)-tetrahydrodipicolinate from L-aspartate: step 3/4. Catalyzes the condensation of (S)-aspartate-beta-semialdehyde [(S)-ASA] and pyruvate to 4-hydroxy-tetrahydrodipicolinate (HTPA). The sequence is that of 4-hydroxy-tetrahydrodipicolinate synthase from Geobacter sp. (strain M21).